The following is a 227-amino-acid chain: Protein FdhD (227 aa).

Residue 210–215 (FARNGK) participates in Mo-bis(molybdopterin guanine dinucleotide) binding.

The protein belongs to the FdhD family.

Its subcellular location is the cytoplasm. In terms of biological role, required for formate dehydrogenase (FDH) activity. The sequence is that of Protein FdhD from Methanocaldococcus jannaschii (strain ATCC 43067 / DSM 2661 / JAL-1 / JCM 10045 / NBRC 100440) (Methanococcus jannaschii).